Here is a 530-residue protein sequence, read N- to C-terminus: Poly(U)-binding-splicing factor PUF60 (530 aa).

The inhibits homodimerization stretch occupies residues 1–487 (MATATIALGT…EDAEIIVKIF (487 aa)). Residue K14 forms a Glycyl lysine isopeptide (Lys-Gly) (interchain with G-Cter in SUMO2) linkage. A Phosphothreonine modification is found at T31. Positions 48-530 (QSIKSVLVKQ…ERFDNSDLSA (483 aa)) are inhibits transcriptional repression, interaction with ERCC3 and apoptosis induction. K51 participates in a covalent cross-link: Glycyl lysine isopeptide (Lys-Gly) (interchain with G-Cter in SUMO2). Position 83 is a phosphoserine (S83). RRM domains lie at 100–178 (CRVY…RPSN) and 197–275 (NRIY…KAVT). Position 215 is a phosphoserine (S215). K222 carries the post-translational modification N6-acetyllysine. A Phosphothreonine modification is found at T285. Residues 387-408 (KKEKEEEELFPESERPEMLSEQ) form a disordered region. K390 is covalently cross-linked (Glycyl lysine isopeptide (Lys-Gly) (interchain with G-Cter in SUMO2)). The span at 398-408 (ESERPEMLSEQ) shows a compositional bias: basic and acidic residues. At K425 the chain carries N6-acetyllysine. K429 is covalently cross-linked (Glycyl lysine isopeptide (Lys-Gly) (interchain with G-Cter in SUMO2)). An RRM 3; atypical domain is found at 433 to 520 (TVMVLRNMVD…RKVVAEVYDQ (88 aa)).

It belongs to the RRM half pint family. In terms of assembly, homodimer. Associates with the spliceosome. Found in a complex with RO60 and Y5 RNA. Found in a complex with FUBP1 and far upstream element (FUSE) DNA segment. Interacts directly with ERCC3. Interacts with CDK7 and GTF2H1. Interacts with SRSF11/P54. Interacts with ARGLU1; interaction may be involved in ARGLU1-mediated modulation of alternative splicing.

It localises to the nucleus. Functionally, DNA- and RNA-binding protein, involved in several nuclear processes such as pre-mRNA splicing, apoptosis and transcription regulation. In association with FUBP1 regulates MYC transcription at the P2 promoter through the core-TFIIH basal transcription factor. Acts as a transcriptional repressor through the core-TFIIH basal transcription factor. Represses FUBP1-induced transcriptional activation but not basal transcription. Decreases ERCC3 helicase activity. Is also involved in pre-mRNA splicing. Promotes splicing of an intron with weak 3'-splice site and pyrimidine tract in a cooperative manner with U2AF2. Involved in apoptosis induction when overexpressed in HeLa cells. Modulates alternative splicing of several mRNAs. Binds to relaxed DNA of active promoter regions. Binds to the pyrimidine tract and 3'-splice site regions of pre-mRNA; binding is enhanced in presence of U2AF2. Binds to Y5 RNA in association with RO60. Binds to poly(U) RNA. The sequence is that of Poly(U)-binding-splicing factor PUF60 from Bos taurus (Bovine).